We begin with the raw amino-acid sequence, 361 residues long: Peroxidase A (361 aa).

Belongs to the peroxidase family. Partially N-glycosylated.

It is found in the secreted. It carries out the reaction 2 a phenolic donor + H2O2 = 2 a phenolic radical donor + 2 H2O. This chain is Peroxidase A, found in Aloe vera (Aloe).